The primary structure comprises 307 residues: UDP-N-acetylenolpyruvoylglucosamine reductase (307 aa).

An FAD-binding PCMH-type domain is found at 29 to 197 (RVGGPAEWFA…LSARFRLDPG (169 aa)). The active site involves arginine 176. Residue serine 227 is the Proton donor of the active site. The active site involves glutamate 297.

The protein belongs to the MurB family. FAD is required as a cofactor.

It localises to the cytoplasm. It catalyses the reaction UDP-N-acetyl-alpha-D-muramate + NADP(+) = UDP-N-acetyl-3-O-(1-carboxyvinyl)-alpha-D-glucosamine + NADPH + H(+). The protein operates within cell wall biogenesis; peptidoglycan biosynthesis. In terms of biological role, cell wall formation. The protein is UDP-N-acetylenolpyruvoylglucosamine reductase of Prochlorococcus marinus (strain MIT 9313).